The primary structure comprises 29 residues: Conotoxin pr6a (29 aa).

Disulfide bonds link C2–C20, C9–C24, and C19–C28.

Expressed by the venom duct.

The protein resides in the secreted. In terms of biological role, intraperitoneal injection into fish (1 nmol) provokes hyperactivity and erratic swimming in various directions after 14 minutes. The protein is Conotoxin pr6a of Conus parius (Cone snail).